A 339-amino-acid chain; its full sequence is DNA repair protein RAD51 homolog 1 (339 aa).

A disordered region spans residues 1-22 (MAMQMQLEASADTSVEEESFGP). Ala2 is subject to N-acetylalanine. Thr13 is modified (phosphothreonine). Ser14 bears the Phosphoserine mark. Residues 48 to 77 (TVEAVAYAPKKELINIKGISEAKADKILTE) form the HhH domain. Tyr54 bears the Phosphotyrosine; by ABL1 mark. Glycyl lysine isopeptide (Lys-Gly) (interchain with G-Cter in ubiquitin) cross-links involve residues Lys58 and Lys64. Residue 127-134 (GEFRTGKT) participates in ATP binding. An interaction with PALB2 region spans residues 184–257 (DVLDNVAYAR…FLRMLLRLAD (74 aa)). Residues 245-260 (LARFLRMLLRLADEFG) carry the Nuclear export signal; masked by the interaction with BRCA2 motif. Thr309 is subject to Phosphothreonine; by CHEK1.

It belongs to the RecA family. RAD51 subfamily. Forms linear homooligomers, giving rise to a RAD51 nucleoprotein filament, which is essential for strand-pairing reactions during DNA recombination. Interacts with BRCA1 and either directly or indirectly with p53. Interacts with XRCC3, RAD54L and RAD54B. Interacts with the BCDX2 subcomplex RAD51C:RAD51B. Component of the homologous recombination repair (HR) complex composed of ERCC5/XPG, BRCA2, PALB2, DSS1 and RAD51. Interacts directly with PALB2 which may serve as a scaffold for a HR complex containing PALB2, BRCA2, RAD51C, RAD51 and XRCC3. Interacts with RAD51AP1 and RAD51AP2. Interacts with CHEK1, and this may require prior phosphorylation of CHEK1. Interacts with the MND1-PSMC3IP heterodimer. Found in a complex, at least composed of BLM, RAD51 and SPIDR; the complex formation is mediated by SPIDR. Interacts with SPIDR; the interaction is direct and recruits RAD51 to DNA damage sites. Interacts with FIGNL1 (via N-terminal one-half region); the interaction is direct. Interacts with RAD51AP1 (via C-terminal region); the interaction is direct. Interacts with NABP2, RPA1, PALB2 and RAD51. Interacts with SWI5/C9orf119, and at lower level with SFR1/MEIR5. Interacts with hyperphosphorylated RPA2; this interaction is necessary for efficient recruitment to chromatin in response to DNA damage. Interacts with SWSAP1; involved in homologous recombination repair. Interacts with PARPBP, BRCA2 and RECQL5; these interactions interfere with the formation of the RAD51-DNA homologous recombination structure. Interacts with POLQ; POLQ acts as an inhibitor of homology-recombination repair (HR) pathway by limiting RAD51 accumulation at resected ends. Interacts with POLN. Interacts with FBH1. Interacts with RFWD3. Interacts with the MCM8-MCM9 complex; the interaction recruits RAD51 to DNA damage sites. Component of a multiprotein complex with MEIOB and SPATA22. Interacts with the complex BRME1:HSF2BP:BRCA2. Interacts with HELQ; stimulating HELQ DNA helicase activity and ability to unwing DNA. Interacts with MMS22L; the interaction is direct and promotes recruitment of RAD51 to sites of DNA damage. Interacts with the ATAD5 RFC-like complex. Within the ATAD5 RFC-like complex, interacts with ATAD5 (via N-terminus); the interaction is direct and enhanced under replication stress. Interacts with WDR48; the interaction is enhanced under replication stress. Interacts with DNA helicase ZGRF1; the interaction promotes RAD51 strand exchange activity. Interacts (when phosphorylated) with TOPBP1; interaction takes place following phosphorylation by CK2 and PLK1 and promotes recruitment to DNA damage sites. Interacts with GRB2; this interaction inhibits RAD51 ATPase activity to stabilize RAD51 on stalled replication forks. In terms of processing, ubiquitinated by the SCF(FBH1) E3 ubiquitin ligase complex, regulating RAD51 subcellular location and preventing its association with DNA. Ubiquitinated by RFWD3 in response to DNA damage: ubiquitination leads to degradation by the proteasome, promoting homologous recombination. Phosphorylation of Thr-309 by CHEK1 may enhance association with chromatin at sites of DNA damage and promote DNA repair by homologous recombination. Phosphorylated at Ser-14 by PLK1, triggering phosphorylation at Thr-13 by CK2, thereby promoting interaction with TOPBP1 and recruitment to DNA damage sites during S-phase. Phosphorylation by ABL1 inhibits function. In terms of tissue distribution, expressed in the testes (at protein level). Expressed in the brain (at protein level). Expressed in the thymus, spleen, ovary and small intestine.

It localises to the nucleus. The protein resides in the cytoplasm. The protein localises to the perinuclear region. It is found in the mitochondrion matrix. Its subcellular location is the chromosome. It localises to the cytoskeleton. The protein resides in the microtubule organizing center. The protein localises to the centrosome. Plays an important role in homologous strand exchange, a key step in DNA repair through homologous recombination (HR). Binds to single-stranded DNA in an ATP-dependent manner to form nucleoprotein filaments which are essential for the homology search and strand exchange. Catalyzes the recognition of homology and strand exchange between homologous DNA partners to form a joint molecule between a processed DNA break and the repair template. Recruited to resolve stalled replication forks during replication stress. Part of a PALB2-scaffolded HR complex containing BRCA2 and RAD51C and which is thought to play a role in DNA repair by HR. Plays a role in regulating mitochondrial DNA copy number under conditions of oxidative stress in the presence of RAD51C and XRCC3. Also involved in interstrand cross-link repair. This is DNA repair protein RAD51 homolog 1 from Mus musculus (Mouse).